The primary structure comprises 765 residues: Palmitoyltransferase ZDHHC8 (765 aa).

Over 1-13 the chain is Cytoplasmic; sequence MPRSPGTRLKPAK. A helical transmembrane segment spans residues 14–34; that stretch reads YIPVATAAALLVGSSTLFFVF. At 35 to 52 the chain is on the lumenal side; sequence TCPWLTRAVSPAVPVYNG. A helical transmembrane segment spans residues 53-73; sequence IIFLFVLANFSMATFMDPGVF. Over 74 to 148 the chain is Cytoplasmic; that stretch reads PRADEDEDKE…NCIGRRNYRY (75 aa). In terms of domain architecture, DHHC spans 104–154; sequence KWCATCHFYRPPRCSHCSVCDNCVEDFDHHCPWVNNCIGRRNYRYFFLFLL. Catalysis depends on cysteine 134, which acts as the S-palmitoyl cysteine intermediate. Residues 149-169 traverse the membrane as a helical segment; the sequence is FFLFLLSLSAHMVGVVAFGLV. The Lumenal segment spans residues 170–190; that stretch reads YVLNHAEGLGAAHTTITMAVM. A helical membrane pass occupies residues 191 to 211; it reads CVAGLFFIPVIGLTGFHVVLV. Over 212 to 765 the chain is Cytoplasmic; it reads TRGRTTNEHV…VGGTTYEISV (554 aa). The segment at 290-386 is disordered; that stretch reads LKAGLGRSKS…PGPDSLTLGE (97 aa). Positions 301-311 are enriched in basic and acidic residues; that stretch reads GSLDRLDEKPL. Positions 333 to 348 are enriched in polar residues; sequence PRPSSAESALSAQRTS. Serine 337 bears the Phosphoserine mark. Arginine 441 carries the post-translational modification Omega-N-methylarginine. Residues 447–542 form a disordered region; that stretch reads ALQPLRSEGG…PREPSPVRYD (96 aa). 2 positions are modified to phosphoserine: serine 606 and serine 627. Positions 630–747 are disordered; that stretch reads SLSSAVSRAP…PGPSASPARH (118 aa). Residues 639-655 are compositionally biased toward polar residues; the sequence is PRTSSSSLQADLANNNA. Over residues 671 to 680 the composition is skewed to pro residues; it reads QGPPSPPSTP. 4 positions are modified to phosphoserine: serine 675, serine 682, serine 725, and serine 743.

Belongs to the DHHC palmitoyltransferase family. ERF2/ZDHHC9 subfamily.

The protein resides in the golgi apparatus membrane. The protein localises to the mitochondrion membrane. The catalysed reaction is L-cysteinyl-[protein] + hexadecanoyl-CoA = S-hexadecanoyl-L-cysteinyl-[protein] + CoA. Its function is as follows. Palmitoyltransferase that catalyzes the addition of palmitate onto various protein substrates and therefore functions in several unrelated biological processes. Through the palmitoylation of ABCA1 regulates the localization of the transporter to the plasma membrane and thereby regulates its function in cholesterol and phospholipid efflux. Could also pamitoylate the D(2) dopamine receptor DRD2 and regulate its stability and localization to the plasma membrane. Could also play a role in glutamatergic transmission. The sequence is that of Palmitoyltransferase ZDHHC8 from Canis lupus familiaris (Dog).